The primary structure comprises 101 residues: MMSLLTPAVLLTQRLHTLTLSVSTPLGLVMTTFESSTLKDARLKLVSQKEVSGRLRLTLGAGRLLYLIQIFLATGTVQFQTMVLPSTDSVDSLPGTYLRKF.

The protein belongs to the orthobunyavirus NS-S protein family.

In Equus caballus (Horse), this protein is Non-structural protein NS-S (N).